The following is a 396-amino-acid chain: S-arrestin (396 aa).

The span at 375–386 (ARDPLKGELQAE) shows a compositional bias: basic and acidic residues. The interval 375–396 (ARDPLKGELQAEEKEEEEDDEK) is disordered. Over residues 387-396 (EKEEEEDDEK) the composition is skewed to acidic residues.

The protein belongs to the arrestin family. In terms of assembly, interacts with RHO (via the phosphorylated C-terminus).

Its subcellular location is the cell projection. The protein resides in the cilium. It localises to the photoreceptor outer segment. The protein localises to the membrane. Binds to photoactivated, phosphorylated RHO and terminates RHO signaling via G-proteins by competing with G-proteins for the same binding site on RHO. May play a role in preventing light-dependent degeneration of retinal photoreceptor cells. The chain is S-arrestin (sag) from Xenopus laevis (African clawed frog).